The sequence spans 511 residues: MTGKRGTAAGTDGSGNKKGKREFKAKLSGLLAEQTCRDSVKEAWEGNQGGQFGSVALDSVPFPHGVIHPFIHNSDFLEELKEELLNLNFQPKSNDLYQFKQSEDLKNRKESHIKALRHVLFEDFRQWLSNITNVELEKTVDISCAQYGYTDTLLCHDDELEGRRFAFILYLVPEWSKSDGGSLDLYGMDDNGQPGPIVKSLVPRWNSLVFFEVSPVSFHQVSEVLSDGKCRLSVSGWFHGCSLERPPRGLDHPPVRSPHIPHDDQILYEWINPSYLSLESQAQIQEEFEERSEILLKDFLKADKFQAICAALETQSITLEKCGPPNKRCYDRAHGDFPGVIGSCMELLRSEAFFLFLSNFTGLKLHFLASNNEESDEGEGPSEPNTVSQQGASSEDDKVPSCSGELRHWQHSYYTMIHDLDPERHEFALDLLLFCGCDDWEAEYGGFTSYIAKEEDEELLTVYPENNCLALVYRDKETMRFVKHINHKSQQRDAKNTKHKGFWDFAFVYYE.

The segment at 1 to 20 (MTGKRGTAAGTDGSGNKKGK) is disordered. The region spanning 138-240 (KTVDISCAQY…RLSVSGWFHG (103 aa)) is the Fe2OG dioxygenase domain. Fe cation is bound by residues H156 and D158. Residue Y170 participates in 2-oxoglutarate binding. Residue H219 coordinates Fe cation. R231 serves as a coordination point for 2-oxoglutarate. Residues 372–403 (NEESDEGEGPSEPNTVSQQGASSEDDKVPSCS) are disordered.

The protein belongs to the TPA1 family. Monomer. It depends on Fe(2+) as a cofactor. The cofactor is L-ascorbate.

Its subcellular location is the cytoplasm. The protein resides in the nucleus. It carries out the reaction [ribosomal protein uS12]-L-proline + 2-oxoglutarate + O2 = [ribosomal protein uS12]-(3S)-3-hydroxy-L-proline + succinate + CO2. Prolyl 3-hydroxylase that catalyzes 3-hydroxylation of 'Pro-62' of small ribosomal subunit uS12 (rps23), thereby regulating protein translation termination efficiency. Involved in stress granule formation. This chain is Prolyl 3-hydroxylase OGFOD1 (ogfod1), found in Xenopus laevis (African clawed frog).